Reading from the N-terminus, the 424-residue chain is Enolase (424 aa).

Gln-165 lines the (2R)-2-phosphoglycerate pocket. Glu-207 acts as the Proton donor in catalysis. Mg(2+) contacts are provided by Asp-244, Glu-283, and Asp-310. (2R)-2-phosphoglycerate is bound by residues Lys-335, Arg-364, Ser-365, and Lys-386. The Proton acceptor role is filled by Lys-335.

Belongs to the enolase family. The cofactor is Mg(2+).

The protein resides in the cytoplasm. The protein localises to the secreted. It localises to the cell surface. The catalysed reaction is (2R)-2-phosphoglycerate = phosphoenolpyruvate + H2O. Its pathway is carbohydrate degradation; glycolysis; pyruvate from D-glyceraldehyde 3-phosphate: step 4/5. Its function is as follows. Catalyzes the reversible conversion of 2-phosphoglycerate (2-PG) into phosphoenolpyruvate (PEP). It is essential for the degradation of carbohydrates via glycolysis. This Chlamydia muridarum (strain MoPn / Nigg) protein is Enolase.